We begin with the raw amino-acid sequence, 234 residues long: Large ribosomal subunit protein uL1 (234 aa).

The protein belongs to the universal ribosomal protein uL1 family. As to quaternary structure, part of the 50S ribosomal subunit.

Its function is as follows. Binds directly to 23S rRNA. The L1 stalk is quite mobile in the ribosome, and is involved in E site tRNA release. Functionally, protein L1 is also a translational repressor protein, it controls the translation of the L11 operon by binding to its mRNA. The protein is Large ribosomal subunit protein uL1 of Yersinia pseudotuberculosis serotype O:1b (strain IP 31758).